The primary structure comprises 365 residues: Chorismate synthase (365 aa).

R48 and R54 together coordinate NADP(+). FMN contacts are provided by residues R125 to S127, N238 to A239, G278, K293 to S297, and R319.

This sequence belongs to the chorismate synthase family. In terms of assembly, homotetramer. FMNH2 serves as cofactor.

It catalyses the reaction 5-O-(1-carboxyvinyl)-3-phosphoshikimate = chorismate + phosphate. Its pathway is metabolic intermediate biosynthesis; chorismate biosynthesis; chorismate from D-erythrose 4-phosphate and phosphoenolpyruvate: step 7/7. In terms of biological role, catalyzes the anti-1,4-elimination of the C-3 phosphate and the C-6 proR hydrogen from 5-enolpyruvylshikimate-3-phosphate (EPSP) to yield chorismate, which is the branch point compound that serves as the starting substrate for the three terminal pathways of aromatic amino acid biosynthesis. This reaction introduces a second double bond into the aromatic ring system. The polypeptide is Chorismate synthase (Janthinobacterium sp. (strain Marseille) (Minibacterium massiliensis)).